A 313-amino-acid chain; its full sequence is Small ribosomal subunit protein uS2 (313 aa).

Residues 233–256 are compositionally biased toward basic and acidic residues; it reads RTMTDKQSDVAKEAKADGKEEAPK. Positions 233–293 are disordered; the sequence is RTMTDKQSDV…SRKLVAAGTA (61 aa).

This sequence belongs to the universal ribosomal protein uS2 family.

The polypeptide is Small ribosomal subunit protein uS2 (Bdellovibrio bacteriovorus (strain ATCC 15356 / DSM 50701 / NCIMB 9529 / HD100)).